The sequence spans 72 residues: Protein kish-A (72 aa).

The signal sequence occupies residues 1–26; that stretch reads MSAIFNFQSLLIVILLLICTCAYLRA. Residues 27 to 53 are Extracellular-facing; it reads LVPNLLDKNKTGILGIFWKCARIGERK. Residue Asn35 is glycosylated (N-linked (GlcNAc...) asparagine). Residues 54–71 traverse the membrane as a helical segment; it reads SPYVAVCCVVMAFSILFM. A topological domain (cytoplasmic) is located at residue Gln72.

It belongs to the KISH family.

It localises to the golgi apparatus membrane. In terms of biological role, involved in the early part of the secretory pathway. The sequence is that of Protein kish-A (tmem167a) from Xenopus tropicalis (Western clawed frog).